Consider the following 387-residue polypeptide: tRNA pseudouridine synthase B (387 aa).

The Nucleophile role is filled by D43.

This sequence belongs to the pseudouridine synthase TruB family. Type 1 subfamily.

The enzyme catalyses uridine(55) in tRNA = pseudouridine(55) in tRNA. Functionally, responsible for synthesis of pseudouridine from uracil-55 in the psi GC loop of transfer RNAs. The chain is tRNA pseudouridine synthase B from Bifidobacterium longum subsp. infantis (strain ATCC 15697 / DSM 20088 / JCM 1222 / NCTC 11817 / S12).